The following is a 572-amino-acid chain: Putative lysozyme-like protein (572 aa).

An N-terminal signal peptide occupies residues 1-17; it reads MRLLLVLLALIFSVVSA. Positions 145 to 165 are enriched in low complexity; it reads MSSSGSSSSSGSSGSSSSSSG. Disordered regions lie at residues 145-199, 231-297, 326-388, and 433-469; these read MSSS…HGGG, SSSS…GGGV, ANSV…GERK, and AGSS…GGSG. The segment covering 166–185 has biased composition (gly residues); sequence SSGGGSSGGGSGGGGGGSGL. Residues 231-240 show a composition bias toward low complexity; it reads SSSSADAGSS. The span at 258–282 shows a compositional bias: gly residues; that stretch reads STGGTGGSSGSSGGGSGGGGGGSGL. The span at 326 to 358 shows a compositional bias: low complexity; the sequence is ANSVSSLAGSMSSSGSSSSSGSSGSSSSSSSSG. The span at 359–382 shows a compositional bias: gly residues; the sequence is SSGGSSGGGSSGGGSGGGGGGSGL. Low complexity predominate over residues 433–452; the sequence is AGSSSSSGSSGSSSSSSSSG. Over residues 453–469 the composition is skewed to gly residues; that stretch reads SSGGSSGGSSGGGGGSG.

It belongs to the dictyostelium lysozyme family.

In Dictyostelium discoideum (Social amoeba), this protein is Putative lysozyme-like protein (alyL).